A 520-amino-acid polypeptide reads, in one-letter code: GMP synthase [glutamine-hydrolyzing] (520 aa).

In terms of domain architecture, Glutamine amidotransferase type-1 spans 9 to 202 (SVLIVDFGSQ…IHNIAGIKGD (194 aa)). The active-site Nucleophile is Cys-86. Active-site residues include His-176 and Glu-178. One can recognise a GMPS ATP-PPase domain in the interval 203-395 (WSMSAYRQKA…LGLPDSFIGR (193 aa)). 230 to 236 (SGGVDSS) is a binding site for ATP.

As to quaternary structure, homodimer.

It carries out the reaction XMP + L-glutamine + ATP + H2O = GMP + L-glutamate + AMP + diphosphate + 2 H(+). It functions in the pathway purine metabolism; GMP biosynthesis; GMP from XMP (L-Gln route): step 1/1. Functionally, catalyzes the synthesis of GMP from XMP. This Rhizobium johnstonii (strain DSM 114642 / LMG 32736 / 3841) (Rhizobium leguminosarum bv. viciae) protein is GMP synthase [glutamine-hydrolyzing].